The chain runs to 146 residues: Ribosome-binding factor A (146 aa).

The tract at residues 121 to 146 is disordered; that stretch reads KQQQFGSADDVTENDIDEADDTEGKA. Over residues 130 to 146 the composition is skewed to acidic residues; the sequence is DVTENDIDEADDTEGKA.

It belongs to the RbfA family. In terms of assembly, monomer. Binds 30S ribosomal subunits, but not 50S ribosomal subunits or 70S ribosomes.

It is found in the cytoplasm. Functionally, one of several proteins that assist in the late maturation steps of the functional core of the 30S ribosomal subunit. Associates with free 30S ribosomal subunits (but not with 30S subunits that are part of 70S ribosomes or polysomes). Required for efficient processing of 16S rRNA. May interact with the 5'-terminal helix region of 16S rRNA. This Shewanella sp. (strain MR-4) protein is Ribosome-binding factor A.